The primary structure comprises 322 residues: Cytochrome c biogenesis protein CcsA (322 aa).

Transmembrane regions (helical) follow at residues 15 to 35 (FSIV…VDGI), 45 to 65 (GMIV…TYSG), 72 to 92 (LYES…VPYF), 98 to 120 (YLST…GLLT), 144 to 164 (MILG…LLVI), 226 to 246 (GISL…VWAN), 253 to 273 (WNWD…AIYL), and 287 to 307 (AIVA…VNLL).

This sequence belongs to the CcmF/CycK/Ccl1/NrfE/CcsA family. In terms of assembly, may interact with Ccs1.

It is found in the plastid. The protein resides in the chloroplast thylakoid membrane. Required during biogenesis of c-type cytochromes (cytochrome c6 and cytochrome f) at the step of heme attachment. In Coffea arabica (Arabian coffee), this protein is Cytochrome c biogenesis protein CcsA.